The chain runs to 249 residues: DNA repair protein RecO (249 aa).

Belongs to the RecO family.

Involved in DNA repair and RecF pathway recombination. This is DNA repair protein RecO from Afipia carboxidovorans (strain ATCC 49405 / DSM 1227 / KCTC 32145 / OM5) (Oligotropha carboxidovorans).